Consider the following 755-residue polypeptide: MTVSILLDSLKDDGQRLSECRHESPFSILGPQPFKDKWIIRIWMPEASEVELITQQTKIKLQNPNHEWIFEGVLEKDPGNDYQIKVNRGGIEHVQHDPWSFRKEWMGEIDRHLFAEGNHHHIWRKMGAHLTEINKKQGVMFCLWAPHAKSVSVIGDLNSWDGRHHPMQKRLGGIWELFIPGLSEGDLYKYEIRTEKGHCYEKADPYGFQHEVRPAKSSVISKIDSFQWNDQSWISNRDNRDPLEQPISVYEMHLGSWMHASSDDPFINSNGEHRAPVPAADMKPGSRLLTYKELANKVIPYVKERGFTHIELMPISEHPFDGSWGYQVTGWYAPTSRFGSPDEFRAFVDSCHKEGIGIILDWVPGHFPKDQHGLAYFDGSHLYEHSDPRVGEHKEWGTLIFNYSRNEVRNFLVANLIFWFDQFHIDGIRVDAVASMLYKDYLRPEGEWIPNEDGGNENFEAVRFLQQANHVLFQHFPGALSIAEESTTWSGVTKPTDMDGLGFNLKWNMGWMHDMLDYFEIDPWFRQFNQNNITFSICYNFTENFMLALSHDEVVHGKSHLLHKMPGDDWQKYANTRALLAYMWTHPGKKTIFMGMEFGQRQEWNVWDDLQWDLLNYEPHKGIQKLVDDLNNLYKREPALWRNDFDEYGFQWIDCDDNKNSVISFMRREKTDGEWLVIVANFTPQNHSNYRIGVPVDGFYEEIFNTDASQYGGSNLGNMGGKSTDLYNIHGYENSIDLCLPPLSVLVLKHKSKKN.

Catalysis depends on D431, which acts as the Nucleophile. E484 (proton donor) is an active-site residue.

The protein belongs to the glycosyl hydrolase 13 family. GlgB subfamily. As to quaternary structure, monomer.

The catalysed reaction is Transfers a segment of a (1-&gt;4)-alpha-D-glucan chain to a primary hydroxy group in a similar glucan chain.. It participates in glycan biosynthesis; glycogen biosynthesis. In terms of biological role, catalyzes the formation of the alpha-1,6-glucosidic linkages in glycogen by scission of a 1,4-alpha-linked oligosaccharide from growing alpha-1,4-glucan chains and the subsequent attachment of the oligosaccharide to the alpha-1,6 position. In Prochlorococcus marinus (strain NATL1A), this protein is 1,4-alpha-glucan branching enzyme GlgB.